The following is a 364-amino-acid chain: RNA-binding protein 48 (364 aa).

One can recognise an RRM domain in the interval 51-129; sequence RYLLVQGVPA…GQLHVCYAPE (79 aa). A compositionally biased stretch (polar residues) spans 157–174; sequence LHSQQAEVNTESSSSTDT. 3 disordered regions span residues 157–191, 239–291, and 343–364; these read LHSQ…EARR, SLHN…ESRK, and ASVP…RRRI. Positions 247–262 are enriched in low complexity; the sequence is VQKTSTQSESSSSSGV.

The protein belongs to the RBM48 family. As to quaternary structure, component of the minor spliceosome, which splices U12-type introns.

As a component of the minor spliceosome, involved in the splicing of U12-type introns in pre-mRNAs. This chain is RNA-binding protein 48 (rbm48), found in Danio rerio (Zebrafish).